A 399-amino-acid chain; its full sequence is Acetate kinase 2 (399 aa).

Mg(2+) is bound at residue asparagine 10. Lysine 17 lines the ATP pocket. Residue arginine 89 coordinates substrate. Catalysis depends on aspartate 146, which acts as the Proton donor/acceptor. ATP-binding positions include 206-210, 281-283, and 329-333; these read HLGNG, DCR, and GIGEN. A Mg(2+)-binding site is contributed by glutamate 384.

Belongs to the acetokinase family. As to quaternary structure, homodimer. Requires Mg(2+) as cofactor. Mn(2+) is required as a cofactor.

The protein resides in the cytoplasm. The catalysed reaction is acetate + ATP = acetyl phosphate + ADP. It functions in the pathway metabolic intermediate biosynthesis; acetyl-CoA biosynthesis; acetyl-CoA from acetate: step 1/2. Catalyzes the formation of acetyl phosphate from acetate and ATP. Can also catalyze the reverse reaction. In Neisseria meningitidis serogroup A / serotype 4A (strain DSM 15465 / Z2491), this protein is Acetate kinase 2.